Reading from the N-terminus, the 419-residue chain is Tyrosine--tRNA ligase (419 aa).

Residue Y34 participates in L-tyrosine binding. The 'HIGH' region signature appears at 39–48 (PTADSLHLGN). 2 residues coordinate L-tyrosine: Y169 and Q173. Residues 229–233 (KFGKS) carry the 'KMSKS' region motif. K232 is a binding site for ATP. One can recognise an S4 RNA-binding domain in the interval 353–419 (LTLIELLISV…GKKKNFVLTY (67 aa)).

Belongs to the class-I aminoacyl-tRNA synthetase family. TyrS type 1 subfamily. Homodimer.

It localises to the cytoplasm. It carries out the reaction tRNA(Tyr) + L-tyrosine + ATP = L-tyrosyl-tRNA(Tyr) + AMP + diphosphate + H(+). Catalyzes the attachment of tyrosine to tRNA(Tyr) in a two-step reaction: tyrosine is first activated by ATP to form Tyr-AMP and then transferred to the acceptor end of tRNA(Tyr). This is Tyrosine--tRNA ligase from Lactococcus lactis subsp. cremoris (strain MG1363).